The sequence spans 386 residues: Bifunctional desaturase/conjugase FADX (386 aa).

Residues 1–28 (MGAGGRMSVAPNNSKCEKKESRSVKRVP) form a disordered region. 2 helical membrane-spanning segments follow: residues 65–85 (LSFI…SPIT) and 87–107 (IAWP…WVLG). The Histidine box-1 signature appears at 108–112 (HECGH). The short motif at 144-148 (HRRHH) is the Histidine box-2 element. The next 3 helical transmembrane spans lie at 182-202 (ALTL…FNVS), 228-248 (IYIS…IAMA), and 250-270 (GLAW…ALVV). The Histidine box-3 signature appears at 318 to 322 (HVIHH).

It belongs to the fatty acid desaturase type 1 family. Expressed exclusively in developing seeds.

The protein resides in the endoplasmic reticulum membrane. It carries out the reaction a (9Z,12Z)-octadecadienoyl-containing glycerolipid + 2 Fe(II)-[cytochrome b5] + O2 + 2 H(+) = a (9Z,11E,13E)-octadecatrienoyl-containing glycerolipid + 2 Fe(III)-[cytochrome b5] + 2 H2O. The catalysed reaction is (9Z,12Z,15Z)-octadecatrienoyl-containing glycerolipid + 2 Fe(II)-[cytochrome b5] + O2 + 2 H(+) = a (9Z,11E,13E,15Z)-octadecatetraenoyl-containing glycerolipid + 2 Fe(III)-[cytochrome b5] + 2 H2O. It catalyses the reaction a (9Z)-octadecenoyl-containing glycerolipid + 2 Fe(II)-[cytochrome b5] + O2 + 2 H(+) = a (9Z,12E)-octadecadienoyl-containing glycerolipid + 2 Fe(III)-[cytochrome b5] + 2 H2O. The enzyme catalyses a (9Z)-hexadecenoyl-containing glycerolipid + 2 Fe(II)-[cytochrome b5] + O2 + 2 H(+) = a (9Z,12E)-hexadecadienoyl-containing glycerolipid + 2 Fe(III)-[cytochrome b5] + 2 H2O. It functions in the pathway lipid metabolism; polyunsaturated fatty acid biosynthesis. Converts linoleic acid to alpha-eleostearic acid (18:3(9Z,11E,13E)) and alpha-linolenic acid to alpha-parinaric acid (18:4(9Z,11E,13E,15Z)). Converts a single cis double bond at carbon 12 to two conjugated trans bonds at positions 11 and 13. Can also act as a 12(E) desaturase when acting on the monounsaturated fatty acids oleate and palmitoleate, stereoselectively introducing a trans double bond. In Vernicia fordii (Tung), this protein is Bifunctional desaturase/conjugase FADX.